A 797-amino-acid chain; its full sequence is Ubiquitin carboxyl-terminal hydrolase 14 (797 aa).

The segment at leucine 156–phenylalanine 266 adopts a UBP-type; degenerate zinc-finger fold. The Zn(2+) site is built by cysteine 180, cysteine 183, cysteine 200, and histidine 213. Residues threonine 308–leucine 796 enclose the USP domain. The active-site Nucleophile is the cysteine 317. UBA domains follow at residues valine 613–histidine 654 and aspartate 670–asparagine 710. The active-site Proton acceptor is histidine 758.

The protein belongs to the peptidase C19 family. Constitutively and ubiquitously expressed (at protein level).

It catalyses the reaction Thiol-dependent hydrolysis of ester, thioester, amide, peptide and isopeptide bonds formed by the C-terminal Gly of ubiquitin (a 76-residue protein attached to proteins as an intracellular targeting signal).. Recognizes and hydrolyzes the peptide bond at the C-terminal Gly of ubiquitin. Involved in the processing of poly-ubiquitin precursors as well as that of ubiquitinated proteins. Involved in seed and embryo development. This chain is Ubiquitin carboxyl-terminal hydrolase 14 (UBP14), found in Arabidopsis thaliana (Mouse-ear cress).